Consider the following 368-residue polypeptide: Probable magnesium transporter (368 aa).

Over 1-4 (MEDK) the chain is Extracellular. A helical transmembrane segment spans residues 5–25 (YIGLALAMSSSLAIGTSFIIT). Topologically, residues 26-50 (KKGLMDASARTGGTDGVQASDYLQN) are cytoplasmic. The chain crosses the membrane as a helical span at residues 51–71 (PIWWGGMITMAIGEIANFAAY). The Extracellular segment spans residues 72–76 (TFAPA). Residues 77-97 (ILVTPLGALSVIIGAVLAAIF) traverse the membrane as a helical segment. Over 98–101 (LKER) the chain is Cytoplasmic. The helical transmembrane segment at 102–122 (LGTLGKMGCAICLMGSVIIIL) threads the bilayer. Residues 123–143 (HAPPDKEVQTVDEILGYATQP) are Extracellular-facing. The chain crosses the membrane as a helical span at residues 144 to 164 (GFMFYCTVVTLYSLFMIYKIV). Residues 165-175 (PKYGNTNPMIY) are Cytoplasmic-facing. Residues 176–196 (LSICSSVGSISVMSIKAFGIA) traverse the membrane as a helical segment. Topologically, residues 197 to 206 (LKLTLGGNNQ) are extracellular. The helical transmembrane segment at 207–227 (FTHVSTYLFLIVVALCIVTQM) threads the bilayer. At 228 to 240 (NYFNKALDQFDTS) the chain is on the cytoplasmic side. The helical transmembrane segment at 241–261 (IVNPLYYVTFTTFTLAASFIL) threads the bilayer. At 262 to 269 (FKGFNTSS) the chain is on the extracellular side. N-linked (GlcNAc...) asparagine glycosylation is present at asparagine 266. Residues 270–290 (AVDIISLLIGFLIIFSGVYLL) form a helical membrane-spanning segment. The Cytoplasmic portion of the chain corresponds to 291–368 (NISRSESPMV…GDEDTRNYRH (78 aa)).

This sequence belongs to the NIPA family.

The protein localises to the cell membrane. It is found in the early endosome. The enzyme catalyses Mg(2+)(in) = Mg(2+)(out). Probably acts as a selective Mg(2+) transporter. Plays a role in cell wall integrity and in engulfment by host macrophages. The chain is Probable magnesium transporter from Candida albicans (strain SC5314 / ATCC MYA-2876) (Yeast).